The sequence spans 251 residues: Ditrans,polycis-undecaprenyl-diphosphate synthase ((2E,6E)-farnesyl-diphosphate specific) (251 aa).

Residue Asp29 is part of the active site. Mg(2+) is bound at residue Asp29. Substrate contacts are provided by residues 30–33 (GNGK), Trp34, Arg42, His46, and 74–76 (SSD). Asn77 functions as the Proton acceptor in the catalytic mechanism. Residues Trp78, Arg80, Arg197, and 203 to 205 (RLS) each bind substrate. Glu216 contacts Mg(2+).

Belongs to the UPP synthase family. As to quaternary structure, homodimer. Mg(2+) serves as cofactor.

It catalyses the reaction 8 isopentenyl diphosphate + (2E,6E)-farnesyl diphosphate = di-trans,octa-cis-undecaprenyl diphosphate + 8 diphosphate. Functionally, catalyzes the sequential condensation of isopentenyl diphosphate (IPP) with (2E,6E)-farnesyl diphosphate (E,E-FPP) to yield (2Z,6Z,10Z,14Z,18Z,22Z,26Z,30Z,34E,38E)-undecaprenyl diphosphate (di-trans,octa-cis-UPP). UPP is the precursor of glycosyl carrier lipid in the biosynthesis of bacterial cell wall polysaccharide components such as peptidoglycan and lipopolysaccharide. The protein is Ditrans,polycis-undecaprenyl-diphosphate synthase ((2E,6E)-farnesyl-diphosphate specific) of Buchnera aphidicola subsp. Baizongia pistaciae (strain Bp).